The sequence spans 435 residues: GTPase Der (435 aa).

EngA-type G domains are found at residues 4–167 and 175–350; these read KIVA…SKND and TKIA…QSLS. GTP-binding positions include 10–17, 57–61, 119–122, 181–188, 228–232, and 293–296; these read GRPNVGKS, DTGGI, NKYD, DTAGI, and NKWD. The KH-like domain maps to 351-435; that stretch reads VKVKTYVLNE…PINLIFRERK (85 aa).

This sequence belongs to the TRAFAC class TrmE-Era-EngA-EngB-Septin-like GTPase superfamily. EngA (Der) GTPase family. As to quaternary structure, associates with the 50S ribosomal subunit.

GTPase that plays an essential role in the late steps of ribosome biogenesis. This is GTPase Der from Mycoplasma mycoides subsp. mycoides SC (strain CCUG 32753 / NCTC 10114 / PG1).